Reading from the N-terminus, the 987-residue chain is UPF0182 protein DIP0733 (987 aa).

7 helical membrane passes run 19–39 (LTWL…VVDL), 63–83 (IGLF…AGWF), 115–135 (FLVV…QQAW), 176–196 (SVLL…LGGI), 212–234 (YAKV…SYWL), 261–281 (AKIV…SVIV), and 290–310 (ISTV…PIMM). Residues 904–927 (DLGEAKGLKPESQNRDKPEDKEGK) are compositionally biased toward basic and acidic residues. The interval 904–950 (DLGEAKGLKPESQNRDKPEDKEGKAPSTPSAPASGSGTTGEAIGKIN) is disordered. Residues 928–943 (APSTPSAPASGSGTTG) are compositionally biased toward low complexity.

Belongs to the UPF0182 family.

Its subcellular location is the cell membrane. The chain is UPF0182 protein DIP0733 from Corynebacterium diphtheriae (strain ATCC 700971 / NCTC 13129 / Biotype gravis).